A 316-amino-acid polypeptide reads, in one-letter code: Glutathione synthetase (316 aa).

Positions 124–310 constitute an ATP-grasp domain; it reads EKLFTAWFPE…ITGKLMDAIE (187 aa). Position 150-207 (150-207) interacts with ATP; that stretch reads FREEHGDVILKPLDGMGGASIFRVKENDPNVSVIIETLTNHGQNYAMAQTFVPDISNG. Residues E281 and N283 each contribute to the Mg(2+) site.

Belongs to the prokaryotic GSH synthase family. Requires Mg(2+) as cofactor. The cofactor is Mn(2+).

It catalyses the reaction gamma-L-glutamyl-L-cysteine + glycine + ATP = glutathione + ADP + phosphate + H(+). It participates in sulfur metabolism; glutathione biosynthesis; glutathione from L-cysteine and L-glutamate: step 2/2. This chain is Glutathione synthetase, found in Vibrio parahaemolyticus serotype O3:K6 (strain RIMD 2210633).